Consider the following 318-residue polypeptide: MTVITIAKRGLPKLTTSTSSTTTASSSSTITSVXSSSSSLPLLSNSTSSSIIPSITPPSRNGNPYILDSGDMPNGTVFIVVGGIAGVIFLAILLWWVITTYSSHRLTRSVQDYESKMFSXQHTQFYGDSPYMDYPAKENFQDQVHISESDISPGNKDESVKDALVSHTNNEKPFLSNFERPLSSLVSESNRNSLFISPTGDILYKTRLSKLYQESPRLLQKPVIMTSDNVSTNSLVSTISSSSASSLDNGNEKEVGEDIRKPAKIASSPSRKLLNSPESDGSVNRNHSKGNLLVVQSKRKPTPSTYLEHMLEGKEQDE.

The disordered stretch occupies residues 15–56; that stretch reads TTSTSSTTTASSSSTITSVXSSSSSLPLLSNSTSSSIIPSIT. The chain crosses the membrane as a helical span at residues 78-98; the sequence is FIVVGGIAGVIFLAILLWWVI. Serine 129 is subject to Phosphoserine. Low complexity predominate over residues 238-247; the sequence is TISSSSASSL. The segment at 238 to 318 is disordered; sequence TISSSSASSL…HMLEGKEQDE (81 aa). The span at 250 to 261 shows a compositional bias: basic and acidic residues; the sequence is GNEKEVGEDIRK. The span at 276–285 shows a compositional bias: polar residues; it reads SPESDGSVNR. Residues serine 279, serine 282, and serine 288 each carry the phosphoserine modification. The segment covering 309–318 has biased composition (basic and acidic residues); the sequence is HMLEGKEQDE. Lysine 314 is covalently cross-linked (Glycyl lysine isopeptide (Lys-Gly) (interchain with G-Cter in ubiquitin)).

It belongs to the PRM5 family.

The protein resides in the membrane. The protein is Pheromone-regulated membrane protein 5 (PRM5) of Saccharomyces cerevisiae (strain Lalvin QA23) (Baker's yeast).